Consider the following 333-residue polypeptide: 4-hydroxy-3-methylbut-2-enyl diphosphate reductase (333 aa).

Cysteine 20 contacts [4Fe-4S] cluster. Positions 49 and 85 each coordinate (2E)-4-hydroxy-3-methylbut-2-enyl diphosphate. Dimethylallyl diphosphate-binding residues include histidine 49 and histidine 85. The isopentenyl diphosphate site is built by histidine 49 and histidine 85. Cysteine 107 lines the [4Fe-4S] cluster pocket. (2E)-4-hydroxy-3-methylbut-2-enyl diphosphate is bound at residue histidine 135. Dimethylallyl diphosphate is bound at residue histidine 135. Residue histidine 135 coordinates isopentenyl diphosphate. The active-site Proton donor is the glutamate 137. (2E)-4-hydroxy-3-methylbut-2-enyl diphosphate is bound at residue threonine 176. Cysteine 206 lines the [4Fe-4S] cluster pocket. Positions 234, 235, 236, and 279 each coordinate (2E)-4-hydroxy-3-methylbut-2-enyl diphosphate. Residues serine 234, serine 235, asparagine 236, and serine 279 each contribute to the dimethylallyl diphosphate site. 4 residues coordinate isopentenyl diphosphate: serine 234, serine 235, asparagine 236, and serine 279.

Belongs to the IspH family. The cofactor is [4Fe-4S] cluster.

It carries out the reaction isopentenyl diphosphate + 2 oxidized [2Fe-2S]-[ferredoxin] + H2O = (2E)-4-hydroxy-3-methylbut-2-enyl diphosphate + 2 reduced [2Fe-2S]-[ferredoxin] + 2 H(+). The catalysed reaction is dimethylallyl diphosphate + 2 oxidized [2Fe-2S]-[ferredoxin] + H2O = (2E)-4-hydroxy-3-methylbut-2-enyl diphosphate + 2 reduced [2Fe-2S]-[ferredoxin] + 2 H(+). Its pathway is isoprenoid biosynthesis; dimethylallyl diphosphate biosynthesis; dimethylallyl diphosphate from (2E)-4-hydroxy-3-methylbutenyl diphosphate: step 1/1. The protein operates within isoprenoid biosynthesis; isopentenyl diphosphate biosynthesis via DXP pathway; isopentenyl diphosphate from 1-deoxy-D-xylulose 5-phosphate: step 6/6. Catalyzes the conversion of 1-hydroxy-2-methyl-2-(E)-butenyl 4-diphosphate (HMBPP) into a mixture of isopentenyl diphosphate (IPP) and dimethylallyl diphosphate (DMAPP). Acts in the terminal step of the DOXP/MEP pathway for isoprenoid precursor biosynthesis. The polypeptide is 4-hydroxy-3-methylbut-2-enyl diphosphate reductase (Rhizobium etli (strain CIAT 652)).